Here is a 301-residue protein sequence, read N- to C-terminus: Transcriptional activator FeaR (301 aa).

In terms of domain architecture, HTH araC/xylS-type spans 199 to 299 (QKVVTLIDDN…GMTPGEYRRK (101 aa)). DNA-binding regions (H-T-H motif) lie at residues 217-238 (EWIAGETGMSVRSLYRMFADKG) and 266-289 (LAGIGFHWGFSDQSHFSTVFKQRF).

Its function is as follows. Positive regulator of tynA/maoA and feaB/padA, the genes for 2-phenylethylamine catabolism. This is Transcriptional activator FeaR (feaR) from Escherichia coli (strain K12).